Reading from the N-terminus, the 554-residue chain is Formate--tetrahydrofolate ligase (554 aa).

67 to 74 serves as a coordination point for ATP; the sequence is TPTGEGKT.

Belongs to the formate--tetrahydrofolate ligase family.

The enzyme catalyses (6S)-5,6,7,8-tetrahydrofolate + formate + ATP = (6R)-10-formyltetrahydrofolate + ADP + phosphate. The protein operates within one-carbon metabolism; tetrahydrofolate interconversion. The sequence is that of Formate--tetrahydrofolate ligase from Finegoldia magna (strain ATCC 29328 / DSM 20472 / WAL 2508) (Peptostreptococcus magnus).